The following is a 284-amino-acid chain: 4-diphosphocytidyl-2-C-methyl-D-erythritol kinase (284 aa).

Residue Lys-14 is part of the active site. Pro-98–Ser-108 lines the ATP pocket. The active site involves Asp-140.

This sequence belongs to the GHMP kinase family. IspE subfamily.

It carries out the reaction 4-CDP-2-C-methyl-D-erythritol + ATP = 4-CDP-2-C-methyl-D-erythritol 2-phosphate + ADP + H(+). Its pathway is isoprenoid biosynthesis; isopentenyl diphosphate biosynthesis via DXP pathway; isopentenyl diphosphate from 1-deoxy-D-xylulose 5-phosphate: step 3/6. Its function is as follows. Catalyzes the phosphorylation of the position 2 hydroxy group of 4-diphosphocytidyl-2C-methyl-D-erythritol. This Shewanella denitrificans (strain OS217 / ATCC BAA-1090 / DSM 15013) protein is 4-diphosphocytidyl-2-C-methyl-D-erythritol kinase.